The sequence spans 586 residues: Arginine--tRNA ligase (586 aa).

The 'HIGH' region signature appears at 133 to 143; sequence ANPTGPLNIVS.

Belongs to the class-I aminoacyl-tRNA synthetase family. Monomer.

The protein resides in the cytoplasm. It carries out the reaction tRNA(Arg) + L-arginine + ATP = L-arginyl-tRNA(Arg) + AMP + diphosphate. The protein is Arginine--tRNA ligase of Leptospira interrogans serogroup Icterohaemorrhagiae serovar Lai (strain 56601).